The primary structure comprises 697 residues: Sialidase B (697 aa).

The signal sequence occupies residues 1–29 (MNKRGLYSKLGISVVGISLLMGVPTLIHA). Arg245 lines the substrate pocket. Residue Asp270 is the Proton acceptor of the active site. 3 BNR repeats span residues 280–291 (SYSDDNGKTWSE), 462–473 (TTSQNRGESWEQ), and 517–528 (LISDDSGQTWKK). Glu541 is a catalytic residue. Arg557 is a binding site for substrate. One copy of the BNR 4 repeat lies at 566–577 (MTSRDSGETWSK). Arg619 lines the substrate pocket. Tyr653 serves as the catalytic Nucleophile.

The protein belongs to the glycosyl hydrolase 33 family.

The catalysed reaction is Hydrolysis of alpha-(2-&gt;3)-, alpha-(2-&gt;6)-, alpha-(2-&gt;8)- glycosidic linkages of terminal sialic acid residues in oligosaccharides, glycoproteins, glycolipids, colominic acid and synthetic substrates.. This chain is Sialidase B (nanB), found in Streptococcus pneumoniae serotype 4 (strain ATCC BAA-334 / TIGR4).